The sequence spans 200 residues: MADQGTEGSQPVDLTKHPSGIVPTLQNIVSTVNLDCKLDLKAIALQARNAEYNPKRFAAVIMRIREPKTTALIFASGKMVCTGAKSEHLSKLAARKYARIVQKLGFPAKFKDFKIQNIVGSCDVKFPIRLEGLAYSHSAFSSYEPELFPGLIYRMKLPKIVLLIFVSGKIVITGAKMREETYTAFENIYPVLREFRKVQQ.

Tandem repeats lie at residues 25-101 and 115-192.

The protein belongs to the TBP family. As to quaternary structure, belongs to the TFIID complex together with the TBP-associated factors (TAFs). Binds DNA as monomer. Interacts with TAF1 (via N-terminus). Interacts with TFIIB1. Interacts with PTF2. Interacts with HAT5/ATHB-1 and ATHB-7. Component of a nuclear protein complex containing at least TATA binding proteins (TBPs, e.g. TBP1 and TBP2) and ATX1.

It is found in the nucleus. Its function is as follows. General transcription factor (GTF) that functions at the core of the DNA-binding multiprotein factor TFIID. Binding of TFIID to the TATA box is the initial transcriptional step of the pre-initiation complex (PIC), playing a role in the activation of eukaryotic genes transcribed by RNA polymerase II. Interacts with TFIIB1 and is required for activated transcription and possibly basal transcription. May act as GTF of RNA polymerase I-dependent transcription and rRNA synthesis. Forms a ternary complex with PBRP1 and the rDNA promoter region. This is TATA-box-binding protein 2 from Arabidopsis thaliana (Mouse-ear cress).